A 360-amino-acid chain; its full sequence is Thioredoxin domain-containing protein 15 (360 aa).

The signal sequence occupies residues 1-32; that stretch reads MVPAAGRRPPRVMRLLGWWQVLLWVLGLPVRG. At 33-321 the chain is on the extracellular side; the sequence is VEVAEESGRL…GPLPSTLIKS (289 aa). The disordered stretch occupies residues 141-173; it reads PDREEEYYTEPEVAESDAAPTEDSNNTESLKSP. Acidic residues predominate over residues 143-155; that stretch reads REEEYYTEPEVAE. Residues 153–296 form the Thioredoxin domain; it reads VAESDAAPTE…LKIFIFNQTG (144 aa). N-linked (GlcNAc...) asparagine glycans are attached at residues N187, N194, N206, and N293. The chain crosses the membrane as a helical span at residues 322–342; the sequence is VDWLLVFSLFFLISFIMYATI. Topologically, residues 343 to 360 are cytoplasmic; sequence RTESIRWLIPGQEQEHVE.

It localises to the cell projection. It is found in the cilium membrane. Its function is as follows. Acts as a positive regulator of ciliary hedgehog signaling. Involved in ciliogenesis. This is Thioredoxin domain-containing protein 15 (TXNDC15) from Homo sapiens (Human).